A 58-amino-acid chain; its full sequence is COP9 signalosome complex subunit 6b (58 aa).

Belongs to the peptidase M67A family. CSN6 subfamily. As to quaternary structure, component of the CSN complex, probably composed of CSN1, CSN2, CSN3, CSN4, CSN5 (CSN5A or CSN5B), CSN6 (CSN6A or CSN6B), CSN7 and CSN8.

The protein localises to the cytoplasm. The protein resides in the nucleus. Component of the COP9 signalosome complex (CSN), a complex involved in various cellular and developmental processes such as photomorphogenesis and auxin and jasmonate responses. The CSN complex is an essential regulator of the ubiquitin (Ubl) conjugation pathway by mediating the deneddylation of the cullin subunits of SCF-type E3 ligase complexes, leading to decrease the Ubl ligase activity of SCF. It is involved in repression of photomorphogenesis in darkness by regulating the activity of COP1-containing Ubl ligase complexes. The sequence is that of COP9 signalosome complex subunit 6b (CSN6B) from Brassica oleracea (Wild cabbage).